Consider the following 55-residue polypeptide: Cytochrome b-c1 complex subunit 9 (55 aa).

Residues 1-15 (MKVIYNTLFKRTSTY) are Mitochondrial matrix-facing. A helical transmembrane segment spans residues 16-41 (AVAIIASAFFFERALDVTSVAIFEGI). Residues 42 to 55 (NKGKLWKDIKGKYE) are Chloroplast intermembrane-facing.

It belongs to the UQCR10/QCR9 family. As to quaternary structure, component of the ubiquinol-cytochrome c oxidoreductase (cytochrome b-c1 complex, complex III, CIII), a multisubunit enzyme composed of 3 respiratory subunits cytochrome b, cytochrome c1 and Rieske protein, 2 core protein subunits, and additional low-molecular weight protein subunits. The complex exists as an obligatory dimer and forms supercomplexes (SCs) in the inner mitochondrial membrane with cytochrome c oxidase (complex IV, CIV).

Its subcellular location is the mitochondrion inner membrane. Functionally, component of the ubiquinol-cytochrome c oxidoreductase, a multisubunit transmembrane complex that is part of the mitochondrial electron transport chain which drives oxidative phosphorylation. The respiratory chain contains 3 multisubunit complexes succinate dehydrogenase (complex II, CII), ubiquinol-cytochrome c oxidoreductase (cytochrome b-c1 complex, complex III, CIII) and cytochrome c oxidase (complex IV, CIV), that cooperate to transfer electrons derived from NADH and succinate to molecular oxygen, creating an electrochemical gradient over the inner membrane that drives transmembrane transport and the ATP synthase. The cytochrome b-c1 complex catalyzes electron transfer from ubiquinol to cytochrome c, linking this redox reaction to translocation of protons across the mitochondrial inner membrane, with protons being carried across the membrane as hydrogens on the quinol. In the process called Q cycle, 2 protons are consumed from the matrix, 4 protons are released into the intermembrane space and 2 electrons are passed to cytochrome c. The protein is Cytochrome b-c1 complex subunit 9 (ox) of Drosophila melanogaster (Fruit fly).